A 116-amino-acid polypeptide reads, in one-letter code: Large ribosomal subunit protein bL19 (116 aa).

The protein belongs to the bacterial ribosomal protein bL19 family.

Its function is as follows. This protein is located at the 30S-50S ribosomal subunit interface and may play a role in the structure and function of the aminoacyl-tRNA binding site. The polypeptide is Large ribosomal subunit protein bL19 (Ectopseudomonas mendocina (strain ymp) (Pseudomonas mendocina)).